Consider the following 173-residue polypeptide: C-phycocyanin beta subunit (173 aa).

Asn73 is subject to N4-methylasparagine. Residues Cys83 and Cys154 each coordinate (2R,3E)-phycocyanobilin.

The protein belongs to the phycobiliprotein family. Heterodimer of an alpha and a beta subunit. Heterodimers further assemble into trimers and the trimers into hexamers. In terms of processing, contains two covalently linked bilin chromophores.

It localises to the cellular thylakoid membrane. Light-harvesting photosynthetic bile pigment-protein from the phycobiliprotein complex (phycobilisome, PBS). Phycocyanin is the major phycobiliprotein in the PBS rod. The sequence is that of C-phycocyanin beta subunit (cpcB) from Mastigocladus laminosus (Fischerella sp.).